The following is a 227-amino-acid chain: ATP phosphoribosyltransferase (227 aa).

It belongs to the ATP phosphoribosyltransferase family. Short subfamily. Heteromultimer composed of HisG and HisZ subunits.

It localises to the cytoplasm. It carries out the reaction 1-(5-phospho-beta-D-ribosyl)-ATP + diphosphate = 5-phospho-alpha-D-ribose 1-diphosphate + ATP. Its pathway is amino-acid biosynthesis; L-histidine biosynthesis; L-histidine from 5-phospho-alpha-D-ribose 1-diphosphate: step 1/9. Its function is as follows. Catalyzes the condensation of ATP and 5-phosphoribose 1-diphosphate to form N'-(5'-phosphoribosyl)-ATP (PR-ATP). Has a crucial role in the pathway because the rate of histidine biosynthesis seems to be controlled primarily by regulation of HisG enzymatic activity. This chain is ATP phosphoribosyltransferase, found in Nitrosospira multiformis (strain ATCC 25196 / NCIMB 11849 / C 71).